The sequence spans 233 residues: Purine nucleoside phosphorylase DeoD-type (233 aa).

His4 lines the a purine D-ribonucleoside pocket. Phosphate contacts are provided by residues Gly20, Arg24, Arg43, and 87–90 (RIGT). Residues 179–181 (EME) and 203–204 (SD) contribute to the a purine D-ribonucleoside site. The active-site Proton donor is Asp204.

This sequence belongs to the PNP/UDP phosphorylase family. Homohexamer; trimer of homodimers.

It catalyses the reaction a purine D-ribonucleoside + phosphate = a purine nucleobase + alpha-D-ribose 1-phosphate. The catalysed reaction is a purine 2'-deoxy-D-ribonucleoside + phosphate = a purine nucleobase + 2-deoxy-alpha-D-ribose 1-phosphate. In terms of biological role, catalyzes the reversible phosphorolytic breakdown of the N-glycosidic bond in the beta-(deoxy)ribonucleoside molecules, with the formation of the corresponding free purine bases and pentose-1-phosphate. The chain is Purine nucleoside phosphorylase DeoD-type from Helicobacter pylori (strain P12).